Consider the following 447-residue polypeptide: Exodeoxyribonuclease 7 large subunit (447 aa).

Belongs to the XseA family. In terms of assembly, heterooligomer composed of large and small subunits.

Its subcellular location is the cytoplasm. The enzyme catalyses Exonucleolytic cleavage in either 5'- to 3'- or 3'- to 5'-direction to yield nucleoside 5'-phosphates.. Its function is as follows. Bidirectionally degrades single-stranded DNA into large acid-insoluble oligonucleotides, which are then degraded further into small acid-soluble oligonucleotides. This Lactobacillus helveticus (strain DPC 4571) protein is Exodeoxyribonuclease 7 large subunit.